The chain runs to 339 residues: Methylthioribose-1-phosphate isomerase (339 aa).

Substrate is bound by residues 52–54 (RGA), arginine 89, and glutamine 188. The Proton donor role is filled by aspartate 229. 239 to 240 (NK) serves as a coordination point for substrate.

It belongs to the eIF-2B alpha/beta/delta subunits family. MtnA subfamily.

It carries out the reaction 5-(methylsulfanyl)-alpha-D-ribose 1-phosphate = 5-(methylsulfanyl)-D-ribulose 1-phosphate. Its pathway is amino-acid biosynthesis; L-methionine biosynthesis via salvage pathway; L-methionine from S-methyl-5-thio-alpha-D-ribose 1-phosphate: step 1/6. Catalyzes the interconversion of methylthioribose-1-phosphate (MTR-1-P) into methylthioribulose-1-phosphate (MTRu-1-P). The sequence is that of Methylthioribose-1-phosphate isomerase from Anaeromyxobacter sp. (strain K).